The sequence spans 126 residues: MKISVGNDIVENSRIRDLLEKHGDRFLKRVFSESEREYCSNRKDPIPHLSGRFCVKEAFIKAIEPGDHVILDMREIELFGKEFGKKELVLHGKSKELFLTKGYSGCSVSISHAENYSTAVVVLYKE.

Residues aspartate 8 and glutamate 57 each coordinate Mg(2+).

This sequence belongs to the P-Pant transferase superfamily. AcpS family. Mg(2+) is required as a cofactor.

The protein resides in the cytoplasm. It catalyses the reaction apo-[ACP] + CoA = holo-[ACP] + adenosine 3',5'-bisphosphate + H(+). Its function is as follows. Transfers the 4'-phosphopantetheine moiety from coenzyme A to a Ser of acyl-carrier-protein. The polypeptide is Holo-[acyl-carrier-protein] synthase (Leptospira interrogans serogroup Icterohaemorrhagiae serovar copenhageni (strain Fiocruz L1-130)).